A 1284-amino-acid polypeptide reads, in one-letter code: Neuronal cell adhesion molecule (1284 aa).

A signal peptide spans 1 to 24 (MMKEKSISASKASLVFFLCQMISA). Topologically, residues 25–1143 (LDVPLDSKLL…ASRQVDIATQ (1119 aa)) are extracellular. Ig-like C2-type domains lie at 41 to 129 (PTIT…AAIS), 136 to 230 (PSRS…QPIS), 243 to 332 (PPVL…ISVT), 337 to 424 (PYWI…AFVN), 430 to 517 (PRIL…VQLE), and 521 to 608 (PTMI…AVLT). 2 disulfide bridges follow: cysteine 63–cysteine 118 and cysteine 162–cysteine 213. Residue asparagine 78 is glycosylated (N-linked (GlcNAc...) asparagine). Residues asparagine 218 and asparagine 290 are each glycosylated (N-linked (GlcNAc...) asparagine). 2 cysteine pairs are disulfide-bonded: cysteine 268–cysteine 316 and cysteine 358–cysteine 408. Asparagine 409, asparagine 483, asparagine 576, asparagine 581, asparagine 595, and asparagine 692 each carry an N-linked (GlcNAc...) asparagine glycan. 2 cysteine pairs are disulfide-bonded: cysteine 452-cysteine 501 and cysteine 543-cysteine 592. 5 consecutive Fibronectin type-III domains span residues 625–720 (PPLD…TKSA), 725–819 (NPSN…SGED), 824–926 (APGN…TPEG), 930–1026 (PPSF…IMDE), and 1040–1132 (QPLY…TGPA). A compositionally biased stretch (polar residues) spans 707-731 (QPSEPSEQYLTKSANPDENPSNVQG). Positions 707-732 (QPSEPSEQYLTKSANPDENPSNVQGI) are disordered. N-linked (GlcNAc...) asparagine glycosylation is found at asparagine 778, asparagine 834, asparagine 885, asparagine 969, asparagine 985, asparagine 995, asparagine 1048, asparagine 1059, and asparagine 1091. A helical transmembrane segment spans residues 1144–1166 (GWFIGLMCAVALLILILLIVCFI). The Cytoplasmic segment spans residues 1167-1284 (RRNKGGKYPV…SPVNAMNSFV (118 aa)). Basic and acidic residues-rich tracts occupy residues 1175-1195 (PVKE…KEDD), 1202-1212 (RSLESDAEDHK), and 1221-1230 (PSDRTVKKED). The interval 1175–1284 (PVKEKEDAHA…SPVNAMNSFV (110 aa)) is disordered. Residues 1268-1284 (NESSEAPSPVNAMNSFV) are compositionally biased toward polar residues.

It belongs to the immunoglobulin superfamily. L1/neurofascin/NgCAM family. In terms of assembly, heterodimer of an alpha and a beta chain. In terms of tissue distribution, retina and developing brain.

It localises to the cell membrane. This protein is a cell adhesion molecule involved in neuron-neuron adhesion, neurite fasciculation, outgrowth of neurites, etc. Specifically involved in the development of optic fibres in the retina. The sequence is that of Neuronal cell adhesion molecule from Gallus gallus (Chicken).